Consider the following 202-residue polypeptide: dTTP/UTP pyrophosphatase (202 aa).

The active-site Proton acceptor is Asp71.

The protein belongs to the Maf family. YhdE subfamily. The cofactor is a divalent metal cation.

The protein localises to the cytoplasm. The catalysed reaction is dTTP + H2O = dTMP + diphosphate + H(+). It catalyses the reaction UTP + H2O = UMP + diphosphate + H(+). In terms of biological role, nucleoside triphosphate pyrophosphatase that hydrolyzes dTTP and UTP. May have a dual role in cell division arrest and in preventing the incorporation of modified nucleotides into cellular nucleic acids. The chain is dTTP/UTP pyrophosphatase from Zymomonas mobilis subsp. mobilis (strain ATCC 31821 / ZM4 / CP4).